Reading from the N-terminus, the 151-residue chain is Chaperonin GroEL (151 aa).

41–45 lines the ATP pocket; the sequence is DGTTT.

The protein belongs to the chaperonin (HSP60) family. Forms a cylinder of 14 subunits composed of two heptameric rings stacked back-to-back. Interacts with the co-chaperonin GroES.

It localises to the cytoplasm. The catalysed reaction is ATP + H2O + a folded polypeptide = ADP + phosphate + an unfolded polypeptide.. Functionally, together with its co-chaperonin GroES, plays an essential role in assisting protein folding. The GroEL-GroES system forms a nano-cage that allows encapsulation of the non-native substrate proteins and provides a physical environment optimized to promote and accelerate protein folding. The protein is Chaperonin GroEL of Mycobacterium avium.